The chain runs to 781 residues: Potassium transporter 5 (781 aa).

A compositionally biased stretch (polar residues) spans 1-11; sequence MTEPLHTSSNG. The disordered stretch occupies residues 1-24; sequence MTEPLHTSSNGGAERGPNAAFESE. The Cytoplasmic portion of the chain corresponds to 1–63; it reads MTEPLHTSSN…AKVGWATTLH (63 aa). The chain crosses the membrane as a helical span at residues 64 to 84; the sequence is LAFQSIGVVYGDMGTSPLYVF. Topologically, residues 85-100 are extracellular; that stretch reads SSTFTNGIKDTNDILG. The helical transmembrane segment at 101-121 threads the bilayer; that stretch reads VMSLIIYTVVLLPLIKYCFIV. At 122–187 the chain is on the cytoplasmic side; the sequence is LRANDNGDGG…EKMENSPNFK (66 aa). Residues 188–208 traverse the membrane as a helical segment; that stretch reads IILFLVTILATSMVIGDGVLT. The Extracellular portion of the chain corresponds to 209-225; the sequence is PCISVLSAVGGIKESAK. The chain crosses the membrane as a helical span at residues 226 to 246; the sequence is SLTQGQIAGIAIAILIVLFLV. Over 247–257 the chain is Cytoplasmic; that stretch reads QRFGTDKVGYS. A helical membrane pass occupies residues 258–278; the sequence is FGPIILTWFIFIAGTGVYNLF. The Extracellular segment spans residues 279 to 304; sequence KHDTGVLKAFNPKYIVDYFERNGKQG. Residues 305–325 traverse the membrane as a helical segment; it reads WISLGGVILCITGTEAMFADL. Residues 326–334 are Cytoplasmic-facing; that stretch reads GHFNVRAIQ. The chain crosses the membrane as a helical span at residues 335-355; it reads IGFSVVLLPSVLLAYIGQAAY. Residues 356–381 lie on the Extracellular side of the membrane; it reads LRIYPEHVADTFYKSIPDPLYWPTFV. A helical transmembrane segment spans residues 382–402; it reads VAVAAAIIASQAMISGAFAII. Topologically, residues 403-426 are cytoplasmic; that stretch reads AQSQILGCFPRVRVIHTSTKFHGQ. Residues 427–447 traverse the membrane as a helical segment; that stretch reads VYIPEINYVLMVLCVAVTAIF. Residues 448-458 are Extracellular-facing; it reads QTTDKIGNAYG. The helical transmembrane segment at 459 to 479 threads the bilayer; it reads IAVVFVMFITTLLVTLVMVMI. Over 480–481 the chain is Cytoplasmic; it reads WK. A helical membrane pass occupies residues 482–502; that stretch reads TSLLWIALFPVIFGGAELIYL. The Extracellular segment spans residues 503 to 512; it reads SSAFYKFTQG. A helical transmembrane segment spans residues 513-533; sequence GYLPLVFSAILMFIMATWHYV. Topologically, residues 534 to 781 are cytoplasmic; that stretch reads HVHRYKYELR…LLRVGMTYEI (248 aa). Positions 681-707 are disordered; that stretch reads VTDPTSEVQDAMSSRNNSDQHTTEPRN. The span at 683 to 700 shows a compositional bias: polar residues; sequence DPTSEVQDAMSSRNNSDQ.

Belongs to the HAK/KUP transporter (TC 2.A.72.3) family. As to expression, expressed in root epidermis, parenchyma of stele tissue and primordial of the lateral root, root-shoot junctions and leaf sheaths. Expressed in germinated embryonic tissue, young tillers, flower organs and pedicels.

The protein resides in the cell membrane. It catalyses the reaction K(+)(in) = K(+)(out). In terms of biological role, high-affinity potassium transporter. Its potassium transporter activity does not seem to be affected by high sodium and low potassium concentrations in the extracellular environment. Invloved in salt stress tolerance by enhancing root potassium uptake and translocation to the shoot to prevent sodium influx during salt stress. Involved in the positive regulation of disease resistance against the rice grassy stunt virus by promoting potassium transport and increasing endogenous plant potassium. In Oryza sativa subsp. japonica (Rice), this protein is Potassium transporter 5 (HAK5).